The chain runs to 21 residues: Trypsin (21 aa).

Positions 1-7 (FPIEEDK) are cleaved as a propeptide — activation peptide. Residues 8-21 (IVGGYECPKHXVPW) enclose the Peptidase S1 domain.

The protein belongs to the peptidase S1 family.

Its subcellular location is the secreted. The protein localises to the extracellular space. The enzyme catalyses Preferential cleavage: Arg-|-Xaa, Lys-|-Xaa.. The polypeptide is Trypsin (Protopterus aethiopicus (Marbled lungfish)).